The primary structure comprises 110 residues: uncharacterized protein (110 aa).

This is an uncharacterized protein from Sulfolobus islandicus rod-shaped virus 1 (SIRV-1).